A 205-amino-acid polypeptide reads, in one-letter code: Recombination protein RecR (205 aa).

The segment at Cys58 to Cys75 adopts a C4-type zinc-finger fold. The region spanning Arg83 to Pro182 is the Toprim domain.

The protein belongs to the RecR family.

In terms of biological role, may play a role in DNA repair. It seems to be involved in an RecBC-independent recombinational process of DNA repair. It may act with RecF and RecO. The polypeptide is Recombination protein RecR (Chloroherpeton thalassium (strain ATCC 35110 / GB-78)).